The chain runs to 137 residues: Large-conductance mechanosensitive channel (137 aa).

3 helical membrane passes run 15–35 (IDLA…NSIV), 38–58 (ILMP…MFIQ), and 80–100 (GNFI…FLFV).

Belongs to the MscL family. Homopentamer.

The protein localises to the cell inner membrane. Functionally, channel that opens in response to stretch forces in the membrane lipid bilayer. May participate in the regulation of osmotic pressure changes within the cell. This is Large-conductance mechanosensitive channel from Bartonella quintana (strain Toulouse) (Rochalimaea quintana).